The primary structure comprises 371 residues: Cytochrome b (371 aa).

4 helical membrane passes run 25–45, 69–90, 105–125, and 170–190; these read FGSMLLTCLALQVLTGFFLAV, WMMQNLHAIGASMFFICIYIHI, WMSGITLLITLMATAFFGYVL, and FFALHFILPFAIISLSSLHVI. Residues histidine 75 and histidine 89 each coordinate heme b. Positions 174 and 188 each coordinate heme b. Histidine 193 is a binding site for a ubiquinone. Helical transmembrane passes span 218–238, 280–300, 312–332, and 339–358; these read YKDFLLLTLMVLSLFIIVSFF, LGGALALVMSIMILFTIPFTH, LYQLMFWTLVSTFITITWAAT, and FITISQVTSTLYFTFFISIP.

It belongs to the cytochrome b family. As to quaternary structure, the cytochrome bc1 complex contains 3 respiratory subunits (MT-CYB, CYC1 and UQCRFS1), 2 core proteins (UQCRC1 and UQCRC2) and probably 6 low-molecular weight proteins. It depends on heme b as a cofactor.

The protein localises to the mitochondrion inner membrane. Functionally, component of the ubiquinol-cytochrome c reductase complex (complex III or cytochrome b-c1 complex) that is part of the mitochondrial respiratory chain. The b-c1 complex mediates electron transfer from ubiquinol to cytochrome c. Contributes to the generation of a proton gradient across the mitochondrial membrane that is then used for ATP synthesis. The polypeptide is Cytochrome b (MT-CYB) (Malayopython reticulatus (Reticulate python)).